The sequence spans 204 residues: FMN-dependent NADH:quinone oxidoreductase 1 (204 aa).

FMN contacts are provided by residues serine 10 and 15–17 (SLS).

This sequence belongs to the azoreductase type 1 family. In terms of assembly, homodimer. It depends on FMN as a cofactor.

It carries out the reaction 2 a quinone + NADH + H(+) = 2 a 1,4-benzosemiquinone + NAD(+). The catalysed reaction is N,N-dimethyl-1,4-phenylenediamine + anthranilate + 2 NAD(+) = 2-(4-dimethylaminophenyl)diazenylbenzoate + 2 NADH + 2 H(+). Quinone reductase that provides resistance to thiol-specific stress caused by electrophilic quinones. In terms of biological role, also exhibits azoreductase activity. Catalyzes the reductive cleavage of the azo bond in aromatic azo compounds to the corresponding amines. This chain is FMN-dependent NADH:quinone oxidoreductase 1, found in Rhizobium etli (strain ATCC 51251 / DSM 11541 / JCM 21823 / NBRC 15573 / CFN 42).